The primary structure comprises 82 residues: uncharacterized protein (82 aa).

This is an uncharacterized protein from Archaeoglobus fulgidus (strain ATCC 49558 / DSM 4304 / JCM 9628 / NBRC 100126 / VC-16).